We begin with the raw amino-acid sequence, 183 residues long: uncharacterized protein (183 aa).

It belongs to the EUO family.

This is an uncharacterized protein from Chlamydia trachomatis serovar D (strain ATCC VR-885 / DSM 19411 / UW-3/Cx).